The following is a 139-amino-acid chain: Cystatin (139 aa).

The N-terminal stretch at 1–23 is a signal peptide; it reads MAGARGCVVLLAAALMLVGAVLG. Positions 76-80 match the Secondary area of contact motif; that stretch reads QLVSG. 2 disulfides stabilise this stretch: cysteine 94/cysteine 104 and cysteine 118/cysteine 138. Serine 103 bears the Phosphoserine mark.

The protein belongs to the cystatin family.

The protein resides in the secreted. This protein binds tightly to and inhibits a variety of thiol proteases including ficin, papain, and cathepsins B, C, H, and L. Although isolated from egg white, it is also present in serum. This is Cystatin from Gallus gallus (Chicken).